A 446-amino-acid polypeptide reads, in one-letter code: WD repeat domain phosphoinositide-interacting protein 1 (446 aa).

7 WD repeats span residues 3–42, 47–88, 92–126, 131–173, 177–216, 222–261, and 304–343; these read AEAA…LFSL, QLDQ…VYHF, TEIC…IHNI, LLKT…LYDG, KTVC…VFSV, LYEF…IFKL, and FATA…MYNL. Positions 131-136 match the Nuclear receptor interaction motif; that stretch reads LLKTLL. Positions 225–228 match the L/FRRG motif motif; it reads FRRG. The interval 386-406 is disordered; that stretch reads ARPSASSASTVPGYSEDGGAL.

It belongs to the WD repeat PROPPIN family. Interacts with androgen receptor (AR) and the estrogen receptors ESR1 and ESR2. Interacts with WIPI2. Interacts with WDR45. Interacts with ATG16L1. May interact with NUDC. Ubiquitously expressed. Highly expressed in skeletal muscle, heart, testis, pancreas and placenta. Highly expressed in G361, Sk-mel-28, Sk-mel-13, WM852 and WM451 cells. Up-regulated in a variety of tumor tissues.

It localises to the golgi apparatus. The protein resides in the trans-Golgi network. It is found in the endosome. Its subcellular location is the cytoplasmic vesicle. The protein localises to the clathrin-coated vesicle. It localises to the preautophagosomal structure membrane. The protein resides in the cytoplasm. It is found in the cytoskeleton. Component of the autophagy machinery that controls the major intracellular degradation process by which cytoplasmic materials are packaged into autophagosomes and delivered to lysosomes for degradation. Plays an important role in starvation- and calcium-mediated autophagy, as well as in mitophagy. Functions downstream of the ULK1 and PI3-kinases that produce phosphatidylinositol 3-phosphate (PtdIns3P) on membranes of the endoplasmic reticulum once activated. Binds phosphatidylinositol 3-phosphate (PtdIns3P), and maybe other phosphoinositides including PtdIns3,5P2 and PtdIns5P, and is recruited to phagophore assembly sites at the endoplasmic reticulum membranes. There, it assists WIPI2 in the recruitment of ATG12-ATG5-ATG16L1, a complex that directly controls the elongation of the nascent autophagosomal membrane. Together with WDR45/WIPI4, promotes ATG2 (ATG2A or ATG2B)-mediated lipid transfer by enhancing ATG2-association with phosphatidylinositol 3-monophosphate (PI3P)-containing membranes. Involved in xenophagy of Staphylococcus aureus. Invading S.aureus cells become entrapped in autophagosome-like WIPI1 positive vesicles targeted for lysosomal degradation. Also plays a distinct role in controlling the transcription of melanogenic enzymes and melanosome maturation, a process that is distinct from starvation-induced autophagy. May also regulate the trafficking of proteins involved in the mannose-6-phosphate receptor (MPR) recycling pathway. This chain is WD repeat domain phosphoinositide-interacting protein 1 (WIPI1), found in Homo sapiens (Human).